The primary structure comprises 59 residues: Large ribosomal subunit protein bL32 (59 aa).

It belongs to the bacterial ribosomal protein bL32 family.

The chain is Large ribosomal subunit protein bL32 from Thermodesulfovibrio yellowstonii (strain ATCC 51303 / DSM 11347 / YP87).